We begin with the raw amino-acid sequence, 1267 residues long: Probable ATP-dependent RNA helicase DHR1 (1267 aa).

Disordered regions lie at residues 1–67 (MGTY…EPLT), 168–233 (YEPK…SNIK), and 255–313 (EELK…DQND). Composition is skewed to basic and acidic residues over residues 7 to 25 (RFNEKARSGHMAKLKELKR) and 32 to 43 (TRQDENDERVEN). A compositionally biased stretch (acidic residues) spans 175–192 (EYGEGGSSEDDDGEDDFE). Ser181 is subject to Phosphoserine. The segment covering 202 to 217 (TDNEEKKSSGFIDHRP) has biased composition (basic and acidic residues). Residues 264–284 (DEMDFDTTSEDDDEEEDQEEE) show a composition bias toward acidic residues. One can recognise a Helicase ATP-binding domain in the interval 401-580 (MEAIHHNDVV…KTLFPIAPPV (180 aa)). 414–421 (GETGSGKT) is an ATP binding site. The DEAH box motif lies at 516–519 (DEAH). In terms of domain architecture, Helicase C-terminal spans 675–858 (DIDFSVQVID…SIVLQMKSMA (184 aa)). Disordered regions lie at residues 693 to 720 (RYEEDEGNSGNGEDEEDEEEEGFEEVLT) and 955 to 976 (PNPDENLDDKIREHDESTPGMD). The segment covering 695–719 (EEDEGNSGNGEDEEDEEEEGFEEVL) has biased composition (acidic residues).

Belongs to the DEAD box helicase family. DEAH subfamily. Interacts with snoRNA U3. Component of the ribosomal small subunit (SSU) processome composed of at least 40 protein subunits and snoRNA U3.

It is found in the nucleus. The protein localises to the nucleolus. The catalysed reaction is ATP + H2O = ADP + phosphate + H(+). In terms of biological role, probable ATP-binding RNA helicase. Required for 18S rRNA synthesis. May play a role in restructuring of the pre-rRNA. This Saccharomyces cerevisiae (strain ATCC 204508 / S288c) (Baker's yeast) protein is Probable ATP-dependent RNA helicase DHR1 (ECM16).